Here is a 257-residue protein sequence, read N- to C-terminus: Imidazole glycerol phosphate synthase subunit HisF (257 aa).

Residues aspartate 12 and aspartate 131 contribute to the active site.

This sequence belongs to the HisA/HisF family. As to quaternary structure, heterodimer of HisH and HisF.

It localises to the cytoplasm. The catalysed reaction is 5-[(5-phospho-1-deoxy-D-ribulos-1-ylimino)methylamino]-1-(5-phospho-beta-D-ribosyl)imidazole-4-carboxamide + L-glutamine = D-erythro-1-(imidazol-4-yl)glycerol 3-phosphate + 5-amino-1-(5-phospho-beta-D-ribosyl)imidazole-4-carboxamide + L-glutamate + H(+). Its pathway is amino-acid biosynthesis; L-histidine biosynthesis; L-histidine from 5-phospho-alpha-D-ribose 1-diphosphate: step 5/9. IGPS catalyzes the conversion of PRFAR and glutamine to IGP, AICAR and glutamate. The HisF subunit catalyzes the cyclization activity that produces IGP and AICAR from PRFAR using the ammonia provided by the HisH subunit. This Burkholderia pseudomallei (strain 1106a) protein is Imidazole glycerol phosphate synthase subunit HisF.